The chain runs to 317 residues: Aspartate carbamoyltransferase catalytic subunit (317 aa).

Residues Arg-66 and Thr-67 each contribute to the carbamoyl phosphate site. Residue Lys-94 coordinates L-aspartate. The carbamoyl phosphate site is built by Arg-116, His-144, and Gln-147. Residues Arg-177 and Arg-231 each coordinate L-aspartate. Positions 272 and 273 each coordinate carbamoyl phosphate.

This sequence belongs to the aspartate/ornithine carbamoyltransferase superfamily. ATCase family. As to quaternary structure, heterododecamer (2C3:3R2) of six catalytic PyrB chains organized as two trimers (C3), and six regulatory PyrI chains organized as three dimers (R2).

The catalysed reaction is carbamoyl phosphate + L-aspartate = N-carbamoyl-L-aspartate + phosphate + H(+). It participates in pyrimidine metabolism; UMP biosynthesis via de novo pathway; (S)-dihydroorotate from bicarbonate: step 2/3. Functionally, catalyzes the condensation of carbamoyl phosphate and aspartate to form carbamoyl aspartate and inorganic phosphate, the committed step in the de novo pyrimidine nucleotide biosynthesis pathway. This Bradyrhizobium sp. (strain BTAi1 / ATCC BAA-1182) protein is Aspartate carbamoyltransferase catalytic subunit.